Consider the following 97-residue polypeptide: Large ribosomal subunit protein bL28 (97 aa).

It belongs to the bacterial ribosomal protein bL28 family.

This is Large ribosomal subunit protein bL28 from Rickettsia typhi (strain ATCC VR-144 / Wilmington).